A 333-amino-acid polypeptide reads, in one-letter code: MQTEQLLLKIIEQTHLTSSEMQQLFTSIIQGELNPIQLTALLITLKIRGESAEEISGAVAACLNAAQPFPTPDYAFADIVGTGGDSANTINISTASAIVGAACGLKIAKHGNRSVSSKTGSSDLLTALGVNINMPADIARRALDEIGLCFLFAQQYHLGFKHAVPVRQALKTRTIFNILGPLINPARPKRQLLGVYSPHLLKPYAETVAQLGHQHTFVVHGCGLDEVAIHGRTDVAEIYDGKITYYSLSPLDFGFQAKPLESLRGGEPAENAQMITALLQGQGKPEHAQAVAMNTALLMKLFGYENIKHNAQQVLDVIQSGKSVNVLSQLTRY.

Residues Gly81, 84–85 (GD), Thr89, 91–94 (NIST), 109–117 (KHGNRSVSS), and Ser121 each bind 5-phospho-alpha-D-ribose 1-diphosphate. Gly81 is a binding site for anthranilate. Ser93 lines the Mg(2+) pocket. Anthranilate is bound at residue Asn112. Residue Arg167 coordinates anthranilate. The Mg(2+) site is built by Asp225 and Glu226.

Belongs to the anthranilate phosphoribosyltransferase family. In terms of assembly, homodimer. The cofactor is Mg(2+).

The catalysed reaction is N-(5-phospho-beta-D-ribosyl)anthranilate + diphosphate = 5-phospho-alpha-D-ribose 1-diphosphate + anthranilate. It functions in the pathway amino-acid biosynthesis; L-tryptophan biosynthesis; L-tryptophan from chorismate: step 2/5. Catalyzes the transfer of the phosphoribosyl group of 5-phosphorylribose-1-pyrophosphate (PRPP) to anthranilate to yield N-(5'-phosphoribosyl)-anthranilate (PRA). The polypeptide is Anthranilate phosphoribosyltransferase (Glaesserella parasuis serovar 5 (strain SH0165) (Haemophilus parasuis)).